Consider the following 1406-residue polypeptide: DNA-directed RNA polymerase subunit beta' (1406 aa).

Zn(2+)-binding residues include Cys-70, Cys-72, Cys-85, and Cys-88. Mg(2+)-binding residues include Asp-460, Asp-462, and Asp-464. Positions 814, 888, 895, and 898 each coordinate Zn(2+).

It belongs to the RNA polymerase beta' chain family. As to quaternary structure, the RNAP catalytic core consists of 2 alpha, 1 beta, 1 beta' and 1 omega subunit. When a sigma factor is associated with the core the holoenzyme is formed, which can initiate transcription. Mg(2+) serves as cofactor. The cofactor is Zn(2+).

The catalysed reaction is RNA(n) + a ribonucleoside 5'-triphosphate = RNA(n+1) + diphosphate. Its function is as follows. DNA-dependent RNA polymerase catalyzes the transcription of DNA into RNA using the four ribonucleoside triphosphates as substrates. The sequence is that of DNA-directed RNA polymerase subunit beta' from Yersinia pseudotuberculosis serotype O:1b (strain IP 31758).